Reading from the N-terminus, the 64-residue chain is Micrurotoxin 1 (64 aa).

5 disulfides stabilise this stretch: Cys3–Cys24, Cys6–Cys11, Cys17–Cys41, Cys45–Cys57, and Cys58–Cys63.

It belongs to the three-finger toxin family. Ancestral subfamily. Expressed by the venom gland.

Its subcellular location is the secreted. In terms of biological role, allosteric modulator of the GABA(A) receptor (GABR), possibly increasing receptor affinity for the agonist, thus enhancing receptor opening and macroscopic desensitization. In vivo, intracerebroventricular injection into mice results in periods of reduced basal activity, followed by bursts of intense seizures and death. This Micrurus mipartitus (Red-tailed coral snake) protein is Micrurotoxin 1.